We begin with the raw amino-acid sequence, 210 residues long: Probable nicotinate-nucleotide adenylyltransferase (210 aa).

This sequence belongs to the NadD family.

It carries out the reaction nicotinate beta-D-ribonucleotide + ATP + H(+) = deamido-NAD(+) + diphosphate. It participates in cofactor biosynthesis; NAD(+) biosynthesis; deamido-NAD(+) from nicotinate D-ribonucleotide: step 1/1. In terms of biological role, catalyzes the reversible adenylation of nicotinate mononucleotide (NaMN) to nicotinic acid adenine dinucleotide (NaAD). This Vesicomyosocius okutanii subsp. Calyptogena okutanii (strain HA) protein is Probable nicotinate-nucleotide adenylyltransferase.